The sequence spans 20 residues: Hongotoxin-5 (20 aa).

It belongs to the short scorpion toxin superfamily. Potassium channel inhibitor family. Alpha-KTx 02 subfamily. In terms of tissue distribution, expressed by the venom gland.

The protein localises to the secreted. Potent selective inhibitor of Kv1/KCNA voltage-gated potassium channels. The protein is Hongotoxin-5 of Centruroides limbatus (Bark scorpion).